An 82-amino-acid chain; its full sequence is Small ribosomal subunit protein uS17 (82 aa).

It belongs to the universal ribosomal protein uS17 family. As to quaternary structure, part of the 30S ribosomal subunit.

Its function is as follows. One of the primary rRNA binding proteins, it binds specifically to the 5'-end of 16S ribosomal RNA. In Aeromonas hydrophila subsp. hydrophila (strain ATCC 7966 / DSM 30187 / BCRC 13018 / CCUG 14551 / JCM 1027 / KCTC 2358 / NCIMB 9240 / NCTC 8049), this protein is Small ribosomal subunit protein uS17.